The chain runs to 718 residues: Kinesin-like protein KIF2C (718 aa).

Positions 1–248 (MESLPARLFP…CHPLTLTDPT (248 aa)) are globular. Phosphoserine occurs at positions 3 and 19. The interval 86-111 (PKQKRRSVNSKIPAPKEGLRSRSTRM) is disordered. S92 is subject to Phosphoserine; by AURKB. The Microtubule tip localization signal signature appears at 95–98 (SKIP). 5 positions are modified to phosphoserine: S106, S108, S112, S163, and S186. The interval 201–232 (EKRAQNSEIRIKRAQEYDSSFPNWEFARMIKE) is negative regulator of microtubule-binding. Positions 252 to 582 (RICVCVRKRP…LRYADRVKEL (331 aa)) constitute a Kinesin motor domain. ATP is bound by residues R258 and 342–349 (GQTGSGKT). The Nuclear localization signal motif lies at 409 to 412 (KKAK). Phosphoserine is present on residues S513 and S626. Coiled coils occupy residues 613-651 (NFKEEEELSSQMSSFNEAMSQIRELEERAMEELREIIQQ) and 689-716 (ALREVIKALRVAMQLEEQASKQMNSKKR).

This sequence belongs to the TRAFAC class myosin-kinesin ATPase superfamily. Kinesin family. MCAK/KIF2 subfamily. Interacts with CENPH. Interacts with MTUS2/TIP150; the interaction is direct. Interacts with MAPRE1; the interaction is direct, regulated by phosphorylation and is probably required for targeting to growing microtubule plus ends. Interacts with KIF18B at microtubule tips; this interaction increases the affinity of both partners for microtubule plus ends and is required for robust microtubule depolymerization. Phosphorylation by AURKA or AURKB strongly reduces KIF18B-binding. Phosphorylation by AURKB, regulates association with centromeres and kinetochores and the microtubule depolymerization activity. In terms of processing, ubiquitinated.

It localises to the cytoplasm. The protein resides in the cytoskeleton. Its subcellular location is the nucleus. The protein localises to the chromosome. It is found in the centromere. It localises to the kinetochore. In complex with KIF18B, constitutes the major microtubule plus-end depolymerizing activity in mitotic cells. Regulates the turnover of microtubules at the kinetochore and functions in chromosome segregation during mitosis. Plays a role in chromosome congression and is required for the lateral to end-on conversion of the chromosome-microtubule attachment. This chain is Kinesin-like protein KIF2C (KIF2C), found in Cricetulus griseus (Chinese hamster).